Consider the following 816-residue polypeptide: Sucrose synthase 1 (816 aa).

The tract at residues 280-757 is GT-B glycosyltransferase; that stretch reads MVFNVVIMSP…GLQRIEEKYT (478 aa).

The protein belongs to the glycosyltransferase 1 family. Plant sucrose synthase subfamily. As to quaternary structure, homotetramer or heterotetramer with SUS2. In terms of tissue distribution, expressed in root phloem and leaf mesophyll. Expressed in phloem tissues and aleurone layers of seeds and at lower levels in the pericarp and endosperm cells (at protein level). Predominantly expressed in elongating tissues including roots, developing leaves and internodes.

The enzyme catalyses an NDP-alpha-D-glucose + D-fructose = a ribonucleoside 5'-diphosphate + sucrose + H(+). Functionally, sucrose-cleaving enzyme that provides UDP-glucose and fructose for various metabolic pathways. This Oryza sativa subsp. japonica (Rice) protein is Sucrose synthase 1 (SUS1).